A 475-amino-acid chain; its full sequence is 3-isopropylmalate dehydratase large subunit (475 aa).

[4Fe-4S] cluster-binding residues include Cys353, Cys414, and Cys417.

Belongs to the aconitase/IPM isomerase family. LeuC type 1 subfamily. Heterodimer of LeuC and LeuD. It depends on [4Fe-4S] cluster as a cofactor.

The enzyme catalyses (2R,3S)-3-isopropylmalate = (2S)-2-isopropylmalate. It participates in amino-acid biosynthesis; L-leucine biosynthesis; L-leucine from 3-methyl-2-oxobutanoate: step 2/4. In terms of biological role, catalyzes the isomerization between 2-isopropylmalate and 3-isopropylmalate, via the formation of 2-isopropylmaleate. This Stutzerimonas stutzeri (strain A1501) (Pseudomonas stutzeri) protein is 3-isopropylmalate dehydratase large subunit.